Consider the following 700-residue polypeptide: Elongation factor G (700 aa).

In terms of domain architecture, tr-type G spans 8 to 290; the sequence is ERYRNIGISA…GVIDFMPSPI (283 aa). GTP contacts are provided by residues 17 to 24, 88 to 92, and 142 to 145; these read AHIDAGKT, DTPGH, and NKMD.

It belongs to the TRAFAC class translation factor GTPase superfamily. Classic translation factor GTPase family. EF-G/EF-2 subfamily.

Its subcellular location is the cytoplasm. Its function is as follows. Catalyzes the GTP-dependent ribosomal translocation step during translation elongation. During this step, the ribosome changes from the pre-translocational (PRE) to the post-translocational (POST) state as the newly formed A-site-bound peptidyl-tRNA and P-site-bound deacylated tRNA move to the P and E sites, respectively. Catalyzes the coordinated movement of the two tRNA molecules, the mRNA and conformational changes in the ribosome. This chain is Elongation factor G, found in Methylibium petroleiphilum (strain ATCC BAA-1232 / LMG 22953 / PM1).